A 401-amino-acid polypeptide reads, in one-letter code: Argininosuccinate synthase (401 aa).

ATP is bound at residue 9 to 17; that stretch reads AYSGGLDTS. Position 86 (Tyr86) interacts with L-citrulline. Residue Gly116 participates in ATP binding. The L-aspartate site is built by Thr118, Asn122, and Asp123. Position 122 (Asn122) interacts with L-citrulline. L-citrulline-binding residues include Arg126, Ser174, Ser183, Glu259, and Tyr271.

Belongs to the argininosuccinate synthase family. Type 1 subfamily. Homotetramer.

The protein resides in the cytoplasm. The catalysed reaction is L-citrulline + L-aspartate + ATP = 2-(N(omega)-L-arginino)succinate + AMP + diphosphate + H(+). It functions in the pathway amino-acid biosynthesis; L-arginine biosynthesis; L-arginine from L-ornithine and carbamoyl phosphate: step 2/3. This is Argininosuccinate synthase from Bacillus mycoides (strain KBAB4) (Bacillus weihenstephanensis).